A 105-amino-acid polypeptide reads, in one-letter code: Pyrimidine/purine nucleoside phosphorylase (105 aa).

It belongs to the nucleoside phosphorylase PpnP family.

The enzyme catalyses a purine D-ribonucleoside + phosphate = a purine nucleobase + alpha-D-ribose 1-phosphate. It catalyses the reaction adenosine + phosphate = alpha-D-ribose 1-phosphate + adenine. The catalysed reaction is cytidine + phosphate = cytosine + alpha-D-ribose 1-phosphate. It carries out the reaction guanosine + phosphate = alpha-D-ribose 1-phosphate + guanine. The enzyme catalyses inosine + phosphate = alpha-D-ribose 1-phosphate + hypoxanthine. It catalyses the reaction thymidine + phosphate = 2-deoxy-alpha-D-ribose 1-phosphate + thymine. The catalysed reaction is uridine + phosphate = alpha-D-ribose 1-phosphate + uracil. It carries out the reaction xanthosine + phosphate = alpha-D-ribose 1-phosphate + xanthine. In terms of biological role, catalyzes the phosphorolysis of diverse nucleosides, yielding D-ribose 1-phosphate and the respective free bases. Can use uridine, adenosine, guanosine, cytidine, thymidine, inosine and xanthosine as substrates. Also catalyzes the reverse reactions. The polypeptide is Pyrimidine/purine nucleoside phosphorylase (Albidiferax ferrireducens (strain ATCC BAA-621 / DSM 15236 / T118) (Rhodoferax ferrireducens)).